A 144-amino-acid polypeptide reads, in one-letter code: Noggin (144 aa).

An N-terminal signal peptide occupies residues 1 to 4 (GGGG). 4 disulfides stabilise this stretch: C67/C104, C90/C140, C96/C142, and C119/C127.

It belongs to the noggin family. As to quaternary structure, homodimer. Interacts with GDF5; inhibits chondrocyte differentiation. In terms of tissue distribution, prominently expressed in the CNS. High levels found in mitral and tufted cells in the olfactory bulb, piriform cortex of the brain and Purkinje cells in the cerebellum. Low level expression seen in the lung, skeletal muscle and skin.

The protein resides in the secreted. Essential for cartilage morphogenesis and joint formation. Inhibitor of bone morphogenetic proteins (BMP) signaling which is required for growth and patterning of the neural tube and somite. Inhibits chondrocyte differentiation through its interaction with GDF5 and, probably, GDF6. The protein is Noggin (Nog) of Rattus norvegicus (Rat).